Reading from the N-terminus, the 203-residue chain is Small ribosomal subunit protein uS4 (203 aa).

In terms of domain architecture, S4 RNA-binding spans 93–156 (QRLDNVVFRL…MKVPAILEAV (64 aa)).

It belongs to the universal ribosomal protein uS4 family. Part of the 30S ribosomal subunit. Contacts protein S5. The interaction surface between S4 and S5 is involved in control of translational fidelity.

Functionally, one of the primary rRNA binding proteins, it binds directly to 16S rRNA where it nucleates assembly of the body of the 30S subunit. With S5 and S12 plays an important role in translational accuracy. The protein is Small ribosomal subunit protein uS4 of Lactococcus lactis subsp. lactis (strain IL1403) (Streptococcus lactis).